The primary structure comprises 526 residues: Osmo-independent choline transporter BetT1 (526 aa).

Residues 1 to 17 (MWSKRDEQKTYPPIRLN) are Cytoplasmic-facing. A helical membrane pass occupies residues 18–38 (PFVFWSSAISISIFGMLFVLF). Residues 39-56 (PETSQHGLTWIQQQVNQL) are Periplasmic-facing. Residues 57–77 (FGWYYMLVIILSLGFVAWLAF) traverse the membrane as a helical segment. The Cytoplasmic portion of the chain corresponds to 78-93 (SQVGNIPLGKAQDKPE). The helical transmembrane segment at 94 to 114 (FGYLVWTSMLFSAGIGIALLY) threads the bilayer. At 115 to 148 (YGVAEPVDHFLRPPEGQGGTVEAAQNAMMYSFLH) the chain is on the periplasmic side. A helical membrane pass occupies residues 149–169 (WGIHGWVLYALVGVTLGYFAF). The Cytoplasmic segment spans residues 170 to 200 (RRDLPLALRSALYPIFGERIHGLVGHMVDGF). Residues 201–221 (GILATIISLVTNLGIGALVMI) form a helical membrane-spanning segment. The Periplasmic portion of the chain corresponds to 222–236 (SGISYLFPDLPNTSS). Residues 237–257 (TLVVTVIMMMLVATLTTVIGI) form a helical membrane-spanning segment. Over 258–272 (EKGLAWLSRINLRLL) the chain is Cytoplasmic. Residues 273–293 (YLLLLFVFLTGPTNHLLNGLV) form a helical membrane-spanning segment. At 294–323 (QNTGDYLSHFVQKSFDLYLYDKNATGWLAS) the chain is on the periplasmic side. The helical transmembrane segment at 324–344 (WTIFYWAWWIAWAPFVGMFIA) threads the bilayer. Residues 345-354 (RISKGRTIRE) are Cytoplasmic-facing. The chain crosses the membrane as a helical span at residues 355-375 (VVLGVCLIPLGFTLAWISIFG). Topologically, residues 376 to 417 (NTAIDLILNHGQQIIGSLVIQDPALSLFKLLEYLPFHPYVAG) are periplasmic. The helical transmembrane segment at 418-438 (IVVVICFVLFLTPVGSGTLMI) threads the bilayer. The Cytoplasmic segment spans residues 439–457 (ANLSSQGGSSDSDSPIWLR). A helical transmembrane segment spans residues 458 to 478 (VFWSIAITIVSIGLLLAGSFS). At 479-482 (AMQS) the chain is on the periplasmic side. Residues 483-503 (AVVLCGLPFSVILLLYMFGLA) traverse the membrane as a helical segment. At 504 to 526 (KALKQETQQPVVESHTTETSGSD) the chain is on the cytoplasmic side.

It belongs to the BCCT transporter (TC 2.A.15) family.

It localises to the cell inner membrane. Sodium-independent high-affinity choline uptake system. Uptake is not proton coupled. May play a role in metabolic adaptation to choline-containing environments. This is Osmo-independent choline transporter BetT1 from Acinetobacter baylyi (strain ATCC 33305 / BD413 / ADP1).